We begin with the raw amino-acid sequence, 949 residues long: Insulin receptor substrate 1 (949 aa).

The 102-residue stretch at 8–109 (GMALSGYLKK…WLDKLLVLQR (102 aa)) folds into the PH domain. The IRS-type PTB domain occupies 122 to 236 (YDQVWQVVIQ…SAMSAKTESN (115 aa)). Residues 247–270 (PDLSHEPMRKRSSSANEASKPINV) form a disordered region. A phosphoserine mark is found at S286, S287, and S342. Positions 304–345 (RNGTLSESSNQTYFGSNHGLRSNTISGNRPHSTNKHSNSPTF) are enriched in polar residues. Residues 304 to 373 (RNGTLSESSN…SDDNGSYSHY (70 aa)) are disordered. Position 410 is a phosphotyrosine; by INSR (Y410). Residues 410 to 413 (YIPM) carry the YXXM motif 1 motif. Residues 530–556 (RSQSSITKEGSGYGTSGNRQKKSTSAP) form a disordered region. Position 554 is a phosphoserine (S554). The short motif at 640-643 (YLEM) is the YXXM motif 2 element. Basic and acidic residues predominate over residues 696 to 706 (REQTTSEEKKS). The tract at residues 696 to 718 (REQTTSEEKKSNSPLNEKPFSLK) is disordered. Y892 carries the phosphotyrosine; by INSR modification. Positions 906-949 (AKYLKRGSRESPPVSACPEDGNTYAKIDFDQSDSSSSSSNIFNT) are disordered. Residues S913 and S916 each carry the phosphoserine modification. Y929 carries the phosphotyrosine; by INSR modification. Residues 937-949 (SDSSSSSSNIFNT) are compositionally biased toward low complexity.

Bindings to phosphatidylinositol 3-kinase and SHP2.

Functionally, activates phosphatidylinositol 3-kinase when bound to the regulatory p85 subunit. May mediate the control of various cellular processes by insulin-like peptides. When phosphorylated by the insulin receptor binds specifically to various cellular proteins containing SH2 domains. Involved in control of cell proliferation, cell size, and body and organ growth throughout development. Also has a role in a signaling pathway controlling the physiological response required to endure periods of low nutrient conditions. Insulin/insulin-like growth factor (IGF) signaling pathway has a role in regulating aging and is necessary in the ovary for vitellogenic maturation. The protein is Insulin receptor substrate 1 of Drosophila yakuba (Fruit fly).